Reading from the N-terminus, the 897-residue chain is Chromodomain-helicase-DNA-binding protein 1-like (897 aa).

R9 is modified (omega-N-methylarginine). A Helicase ATP-binding domain is found at 58–223 (AQRFHCQNGC…YSLLSFVEPD (166 aa)). 71–78 (DEMGLGKT) provides a ligand contact to ATP. Residues 174-177 (DEAH) carry the DEAH box motif. One can recognise a Helicase C-terminal domain in the interval 351-513 (LLDKLLAFLY…QKPAADADLQ (163 aa)). Phosphoserine occurs at positions 540, 607, 618, 628, and 636. The segment at 601–635 (TLLEKASQEGRSLRNKGSVLIPGLVEGSTKRKRVL) is regulatory linker segment (RLS). The tract at residues 615 to 673 (NKGSVLIPGLVEGSTKRKRVLSPEELEDRQKKRQEAAAKRRRLIEEKKRQKEEAEHKKK) is required for ATPase activity. 2 disordered regions span residues 628–654 (STKR…AAKR) and 687–711 (LPSE…DYQD). Residues 638–675 (EELEDRQKKRQEAAAKRRRLIEEKKRQKEEAEHKKKMA) are a coiled coil. The span at 642 to 654 (DRQKKRQEAAAKR) shows a compositional bias: basic and acidic residues. The segment covering 690–711 (EESEPEDLENGEESSAELDYQD) has biased composition (acidic residues). The 194-residue stretch at 704 to 897 (SAELDYQDPD…SSSSSRQLVP (194 aa)) folds into the Macro domain. S891 carries the post-translational modification Phosphoserine.

It belongs to the SNF2/RAD54 helicase family. As to quaternary structure, interacts with nucleosomes; interacts with the acidic patch of histones. Interacts (via macro domain) with PARP1; interacts only when PARP1 is poly-ADP-ribosylated (PARylated). Interacts with CIAO1. In terms of tissue distribution, frequently overexpressed in hepatomacellular carcinomas.

The protein resides in the nucleus. The protein localises to the chromosome. It carries out the reaction ATP + H2O = ADP + phosphate + H(+). Its activity is regulated as follows. Adopts an inactive conformation in absence of DNA damage. Binding to poly-ADP-ribosylated histones activates the ATP-dependent chromatin remodeler activity. Its function is as follows. ATP-dependent chromatin remodeler that mediates chromatin-remodeling following DNA damage. Recruited to DNA damage sites through interaction with poly-ADP-ribose: specifically recognizes and binds histones that are poly-ADP-ribosylated on serine residues in response to DNA damage. Poly-ADP-ribose-binding activates the ATP-dependent chromatin remodeler activity, thereby regulating chromatin during DNA repair. Catalyzes nucleosome sliding away from DNA breaks in an ATP-dependent manner. Chromatin remodeling activity promotes PARP2 removal from chromatin. This chain is Chromodomain-helicase-DNA-binding protein 1-like, found in Homo sapiens (Human).